Here is a 318-residue protein sequence, read N- to C-terminus: Rhomboid-related protein 4 (318 aa).

At 1 to 21 (MQRRSRGINTGLILLLSQIFH) the chain is on the cytoplasmic side. Residues 22 to 42 (VGINNIPPVTLATLALNIWFF) form a helical membrane-spanning segment. Residues 43–106 (LNPQKPLYSS…RRLGSRWFAY (64 aa)) lie on the Extracellular side of the membrane. Residues 107–127 (VITTFSVLTGVVYLLLQFAVA) form a helical membrane-spanning segment. Over 128-137 (EFMDEPDFKR) the chain is Cytoplasmic. A helical membrane pass occupies residues 138–154 (SCAVGFSGVLFALKVLN). The active-site Nucleophile is Ser-144. At 155–179 (NHYCPGGFVNILGFPVPNRFACWVE) the chain is on the extracellular side. The helical transmembrane segment at 180–204 (LVAIHLFSPGTSFAGHQAGILVGLM) threads the bilayer. The active site involves His-195. At 205 to 318 (YTQGPLKKIM…RQRLHRFDSQ (114 aa)) the chain is on the cytoplasmic side. Residues 271–286 (SEEEQLERALQASLWD) are ubiquitin-binding domain (UBD). A disordered region spans residues 285 to 318 (WDRGHTRNSPPPYGFHLSPEEEMRRQRLHRFDSQ). Positions 302 to 318 (SPEEEMRRQRLHRFDSQ) are enriched in basic and acidic residues. Residues 303–318 (PEEEMRRQRLHRFDSQ) are VCP/p97-interacting motif (VIM).

This sequence belongs to the peptidase S54 family. In terms of assembly, interacts with BIK and STEAP3. Interacts (via C-terminal domain) with VCP. Interacts with ubiquitin and ubiquitinated proteins.

The protein localises to the endoplasmic reticulum membrane. It is found in the mitochondrion membrane. It catalyses the reaction Cleaves type-1 transmembrane domains using a catalytic dyad composed of serine and histidine that are contributed by different transmembrane domains.. Its activity is regulated as follows. Inhibited by aprotinin. In terms of biological role, intramembrane-cleaving serine protease that cleaves single transmembrane or multi-pass membrane proteins in the hydrophobic plane of the membrane, luminal loops and juxtamembrane regions. Involved in regulated intramembrane proteolysis and the subsequent release of functional polypeptides from their membrane anchors. Functional component of endoplasmic reticulum-associated degradation (ERAD) for misfolded membrane proteins. Required for the degradation process of some specific misfolded endoplasmic reticulum (ER) luminal proteins. Participates in the transfer of misfolded proteins from the ER to the cytosol, where they are destroyed by the proteasome in a ubiquitin-dependent manner. Functions in BIK, MPZ, PKD1, PTCRA, RHO, STEAP3 and TRAC processing. Involved in the regulation of exosomal secretion; inhibits the TSAP6-mediated secretion pathway. Involved in the regulation of apoptosis; modulates BIK-mediated apoptotic activity. Also plays a role in the regulation of spermatogenesis; inhibits apoptotic activity in spermatogonia. This chain is Rhomboid-related protein 4 (RHBDD1), found in Pongo abelii (Sumatran orangutan).